A 386-amino-acid polypeptide reads, in one-letter code: Phosphatidyl-myo-inositol mannosyltransferase (386 aa).

Positions 9 and 16 each coordinate GDP-alpha-D-mannose. A 1,2-diacyl-sn-glycero-3-phospho-(1D-myo-inositol) is bound by residues Gln18, Tyr62–Asn63, and Arg68. Residues Arg196, Arg201–Lys202, Val251–Asp253, Lys256, Glu274–Ile278, and Glu282 contribute to the GDP-alpha-D-mannose site.

The protein belongs to the glycosyltransferase group 1 family. Glycosyltransferase 4 subfamily. In terms of assembly, monomer. Mg(2+) is required as a cofactor.

The protein resides in the cell membrane. The catalysed reaction is a 1,2-diacyl-sn-glycero-3-phospho-(1D-myo-inositol) + GDP-alpha-D-mannose = a 1,2-diacyl-sn-glycero-3-phospho-[alpha-D-mannopyranosyl-(1&lt;-&gt;6)-D-myo-inositol] + GDP + H(+). Its pathway is phospholipid metabolism; phosphatidylinositol metabolism. Functionally, involved in the biosynthesis of phosphatidyl-myo-inositol mannosides (PIM) which are early precursors in the biosynthesis of lipomannans (LM) and lipoarabinomannans (LAM). Catalyzes the addition of a mannosyl residue from GDP-D-mannose (GDP-Man) to the position 2 of the carrier lipid phosphatidyl-myo-inositol (PI) to generate a phosphatidyl-myo-inositol bearing an alpha-1,2-linked mannose residue (PIM1). In contrary to PimB, the mannosyltransferase PimA is unable to transfer a mannose residue to the position 6 of the phosphatidyl-myo-inositol of PIM1. This chain is Phosphatidyl-myo-inositol mannosyltransferase, found in Mycolicibacterium smegmatis (strain ATCC 700084 / mc(2)155) (Mycobacterium smegmatis).